The primary structure comprises 443 residues: Phosphoglucosamine mutase (443 aa).

Residue S102 is the Phosphoserine intermediate of the active site. Mg(2+) contacts are provided by S102, D241, D243, and D245. Phosphoserine is present on S102.

It belongs to the phosphohexose mutase family. Mg(2+) is required as a cofactor. Activated by phosphorylation.

It carries out the reaction alpha-D-glucosamine 1-phosphate = D-glucosamine 6-phosphate. Its function is as follows. Catalyzes the conversion of glucosamine-6-phosphate to glucosamine-1-phosphate. The protein is Phosphoglucosamine mutase of Albidiferax ferrireducens (strain ATCC BAA-621 / DSM 15236 / T118) (Rhodoferax ferrireducens).